A 280-amino-acid chain; its full sequence is 2-dehydro-3-deoxyphosphooctonate aldolase (280 aa).

The protein belongs to the KdsA family.

Its subcellular location is the cytoplasm. It catalyses the reaction D-arabinose 5-phosphate + phosphoenolpyruvate + H2O = 3-deoxy-alpha-D-manno-2-octulosonate-8-phosphate + phosphate. It functions in the pathway carbohydrate biosynthesis; 3-deoxy-D-manno-octulosonate biosynthesis; 3-deoxy-D-manno-octulosonate from D-ribulose 5-phosphate: step 2/3. It participates in bacterial outer membrane biogenesis; lipopolysaccharide biosynthesis. This is 2-dehydro-3-deoxyphosphooctonate aldolase from Pseudomonas putida (strain W619).